We begin with the raw amino-acid sequence, 118 residues long: Large ribosomal subunit protein bL20 (118 aa).

It belongs to the bacterial ribosomal protein bL20 family.

Binds directly to 23S ribosomal RNA and is necessary for the in vitro assembly process of the 50S ribosomal subunit. It is not involved in the protein synthesizing functions of that subunit. This chain is Large ribosomal subunit protein bL20, found in Cyanothece sp. (strain PCC 7425 / ATCC 29141).